The following is a 943-amino-acid chain: Protein translocase subunit SecA (943 aa).

ATP contacts are provided by residues Gln90, 108-112 (GEGKT), and Asp509. Positions 537–556 (NEHKPPIPKQRSSKSKGGFS) are disordered.

This sequence belongs to the SecA family. As to quaternary structure, monomer and homodimer. Part of the essential Sec protein translocation apparatus which comprises SecA, SecYEG and auxiliary proteins SecDF. Other proteins may also be involved.

It localises to the cell inner membrane. It is found in the cellular thylakoid membrane. Its subcellular location is the cytoplasm. It carries out the reaction ATP + H2O + cellular proteinSide 1 = ADP + phosphate + cellular proteinSide 2.. Functionally, part of the Sec protein translocase complex. Interacts with the SecYEG preprotein conducting channel. Has a central role in coupling the hydrolysis of ATP to the transfer of proteins into and across the cell membrane, serving as an ATP-driven molecular motor driving the stepwise translocation of polypeptide chains across the membrane. In terms of biological role, probably participates in protein translocation into and across both the cytoplasmic and thylakoid membranes in cyanobacterial cells. In Prochlorococcus marinus (strain MIT 9301), this protein is Protein translocase subunit SecA.